Consider the following 533-residue polypeptide: Neuropilin and tolloid-like protein 1 (533 aa).

The N-terminal stretch at 1–22 (MIYGRSLFHIIASLIILHSSGA) is a signal peptide. Residues 23–344 (TKKGTEKQIT…LDQLTNTSGT (322 aa)) lie on the Extracellular side of the membrane. Disulfide bonds link cysteine 41-cysteine 68, cysteine 96-cysteine 118, cysteine 172-cysteine 202, cysteine 229-cysteine 251, cysteine 292-cysteine 304, cysteine 299-cysteine 317, and cysteine 311-cysteine 326. 2 CUB domains span residues 41–155 (CGTW…YNFT) and 172–287 (CEFE…FTSF). One can recognise an LDL-receptor class A domain in the interval 291 to 327 (PCEGNTFFCHSNMCINNTLVCNGLQNCVYPWDENHCK). Asparagine 306 is a glycosylation site (N-linked (GlcNAc...) asparagine). Asparagine 340 carries an N-linked (GlcNAc...) asparagine glycan. A helical membrane pass occupies residues 345–365 (VIGVTSCIVIILIIVSVIVQI). At 366 to 533 (KQPRKKYVQR…HESEYNTTRV (168 aa)) the chain is on the cytoplasmic side. A Phosphotyrosine modification is found at tyrosine 417. Positions 531-533 (TRV) match the PDZ-binding motif.

Interacts with PLZ domains of DLG2, DLG3 and DLG4 via its C-terminal TRV domain. Interacts with GRIN2A and GRIN2B via its CUB domains. Expressed only in brain. Present throughout the central nervous system. Highly expressed in the hippocampal CA3 region, olfactory bulb and tubercle, caudate putamen, and neocortex in the adult brain.

The protein resides in the membrane. The protein localises to the postsynaptic density membrane. Its function is as follows. Involved in the development and/or maintenance of neuronal circuitry. Accessory subunit of the neuronal N-methyl-D-aspartate receptor (NMDAR) critical for maintaining the abundance of GRIN2A-containing NMDARs in the postsynaptic density. Regulates long-term NMDA receptor-dependent synaptic plasticity and cognition, at least in the context of spatial learning and memory. This is Neuropilin and tolloid-like protein 1 (Neto1) from Mus musculus (Mouse).